The chain runs to 429 residues: Enolase (429 aa).

Gln168 is a binding site for (2R)-2-phosphoglycerate. Glu210 (proton donor) is an active-site residue. Mg(2+) is bound by residues Asp247, Glu288, and Asp315. 4 residues coordinate (2R)-2-phosphoglycerate: Lys340, Arg369, Ser370, and Lys391. Catalysis depends on Lys340, which acts as the Proton acceptor.

It belongs to the enolase family. The cofactor is Mg(2+).

It localises to the cytoplasm. It is found in the secreted. The protein resides in the cell surface. It carries out the reaction (2R)-2-phosphoglycerate = phosphoenolpyruvate + H2O. It participates in carbohydrate degradation; glycolysis; pyruvate from D-glyceraldehyde 3-phosphate: step 4/5. Its function is as follows. Catalyzes the reversible conversion of 2-phosphoglycerate (2-PG) into phosphoenolpyruvate (PEP). It is essential for the degradation of carbohydrates via glycolysis. The polypeptide is Enolase (Trichormus variabilis (strain ATCC 29413 / PCC 7937) (Anabaena variabilis)).